A 259-amino-acid chain; its full sequence is Exosome complex component Rrp42 (259 aa).

Belongs to the RNase PH family. Rrp42 subfamily. Component of the archaeal exosome complex. Forms a hexameric ring-like arrangement composed of 3 Rrp41-Rrp42 heterodimers. The hexameric ring associates with a trimer of Rrp4 and/or Csl4 subunits.

The protein localises to the cytoplasm. Functionally, non-catalytic component of the exosome, which is a complex involved in RNA degradation. Contributes to the structuring of the Rrp41 active site. The sequence is that of Exosome complex component Rrp42 from Archaeoglobus fulgidus (strain ATCC 49558 / DSM 4304 / JCM 9628 / NBRC 100126 / VC-16).